Consider the following 226-residue polypeptide: 2-C-methyl-D-erythritol 4-phosphate cytidylyltransferase (226 aa).

This sequence belongs to the IspD/TarI cytidylyltransferase family. IspD subfamily.

It carries out the reaction 2-C-methyl-D-erythritol 4-phosphate + CTP + H(+) = 4-CDP-2-C-methyl-D-erythritol + diphosphate. It functions in the pathway isoprenoid biosynthesis; isopentenyl diphosphate biosynthesis via DXP pathway; isopentenyl diphosphate from 1-deoxy-D-xylulose 5-phosphate: step 2/6. In terms of biological role, catalyzes the formation of 4-diphosphocytidyl-2-C-methyl-D-erythritol from CTP and 2-C-methyl-D-erythritol 4-phosphate (MEP). The sequence is that of 2-C-methyl-D-erythritol 4-phosphate cytidylyltransferase from Rhodococcus opacus (strain B4).